We begin with the raw amino-acid sequence, 141 residues long: Transcription antitermination protein NusB (141 aa).

The protein belongs to the NusB family.

Its function is as follows. Involved in transcription antitermination. Required for transcription of ribosomal RNA (rRNA) genes. Binds specifically to the boxA antiterminator sequence of the ribosomal RNA (rrn) operons. The protein is Transcription antitermination protein NusB of Neisseria meningitidis serogroup B (strain ATCC BAA-335 / MC58).